The primary structure comprises 377 residues: Homoserine O-succinyltransferase (377 aa).

The region spanning 45–356 (NAVLVCHALN…PHGHDAFLLD (312 aa)) is the AB hydrolase-1 domain. The active-site Nucleophile is S151. R221 provides a ligand contact to substrate. Active-site residues include D317 and H350. D351 is a substrate binding site.

This sequence belongs to the AB hydrolase superfamily. MetX family. As to quaternary structure, homodimer.

The protein resides in the cytoplasm. The catalysed reaction is L-homoserine + succinyl-CoA = O-succinyl-L-homoserine + CoA. It functions in the pathway amino-acid biosynthesis; L-methionine biosynthesis via de novo pathway; O-succinyl-L-homoserine from L-homoserine: step 1/1. Functionally, transfers a succinyl group from succinyl-CoA to L-homoserine, forming succinyl-L-homoserine. This is Homoserine O-succinyltransferase from Leptothrix cholodnii (strain ATCC 51168 / LMG 8142 / SP-6) (Leptothrix discophora (strain SP-6)).